The primary structure comprises 331 residues: UAP56-interacting factor (331 aa).

The UAP56-binding motif motif lies at 16–34 (APDKVDMSLDDIIRLNKKE). Disordered stretches follow at residues 30–51 (LNKKEQQARRPSPGNRRPLQKG), 63–99 (RARGQTQRGGGVPRGAITRAGVGRGRKIPPPVGRRRG), and 158–193 (GQRRPYRQTDIQRGLNSTRPFQQRRRPLPPVQTQRE). Residues 166-175 (TDIQRGLNST) are compositionally biased toward polar residues.

Belongs to the UIF family.

Its subcellular location is the nucleus. It localises to the nucleoplasm. The protein resides in the nucleus speckle. Functionally, required for mRNA export from the nucleus to the cytoplasm. Acts as an adapter that uses the ddx39b/uap56-nfx1 pathway to ensure efficient mRNA export and delivering to the nuclear pore. The polypeptide is UAP56-interacting factor (fyttd1) (Salmo salar (Atlantic salmon)).